The sequence spans 306 residues: Deoxyribokinase (306 aa).

Substrate is bound by residues 10-12 (MVD), 38-42 (GKGAN), and Glu-139. Residues Asn-184 and 220–225 (TMGEKG) contribute to the ATP site. K(+) is bound by residues Asp-246 and Ser-248. An ATP-binding site is contributed by 251–252 (GD). Asp-252 lines the substrate pocket. The Proton acceptor role is filled by Asp-252. Residues Ser-282, Gly-285, Gly-287, and Ser-291 each coordinate K(+).

Belongs to the carbohydrate kinase PfkB family. Deoxyribokinase subfamily. In terms of assembly, homodimer. Requires Mg(2+) as cofactor.

Its subcellular location is the cytoplasm. It catalyses the reaction 2-deoxy-D-ribose + ATP = 2-deoxy-D-ribose 5-phosphate + ADP + H(+). Catalyzes the ATP-dependent phosphorylation of 2-deoxy-D-ribose to 2-deoxy-D-ribose 5-phosphate (dRib-5P), allowing the use of deoxyribose as the sole carbon source. Can also use D-ribose, with much lower efficiency. The chain is Deoxyribokinase from Salmonella typhi.